The sequence spans 156 residues: Small ribosomal subunit protein uS7 (156 aa).

This sequence belongs to the universal ribosomal protein uS7 family. In terms of assembly, part of the 30S ribosomal subunit. Contacts proteins S9 and S11.

In terms of biological role, one of the primary rRNA binding proteins, it binds directly to 16S rRNA where it nucleates assembly of the head domain of the 30S subunit. Is located at the subunit interface close to the decoding center, probably blocks exit of the E-site tRNA. In Acidobacterium capsulatum (strain ATCC 51196 / DSM 11244 / BCRC 80197 / JCM 7670 / NBRC 15755 / NCIMB 13165 / 161), this protein is Small ribosomal subunit protein uS7.